Here is a 215-residue protein sequence, read N- to C-terminus: UPF0502 protein YceH (215 aa).

N6-acetyllysine is present on Lys80.

It belongs to the UPF0502 family.

The polypeptide is UPF0502 protein YceH (Escherichia coli O7:K1 (strain IAI39 / ExPEC)).